The following is a 375-amino-acid chain: Secondary metabolism regulator laeA (375 aa).

A compositionally biased stretch (polar residues) spans 15–26; it reads ASPNRNNYSYQG. Disordered regions lie at residues 15 to 37 and 50 to 75; these read ASPN…RSRQ and QEPP…TSHY.

This sequence belongs to the methyltransferase superfamily. LaeA methyltransferase family. Component of the heterotrimeric velvet complex composed of laeA, veA and velB; VeA acting as a bridging protein between laeA and velB.

Its subcellular location is the nucleus. It carries out the reaction L-methionyl-[protein] + S-adenosyl-L-methionine = S-methyl-L-methionyl-[protein] + S-adenosyl-L-homocysteine. In terms of biological role, methyltransferase that performs automethylation. No other methyl-accepting substrate has been identified yet. Component of the velvet transcription factor complex that acts as a global regulator for secondary metabolite gene expression. Controls the expression of the citric acid, demethylkotanin, orlandin, asperrubrol, tensidol B, atromentin and JBIR8 gene clusters. Also represses the expression of genes related to the production of BMS-192548 and aspernigrin A. The protein is Secondary metabolism regulator laeA of Aspergillus niger (strain ATCC 1015 / CBS 113.46 / FGSC A1144 / LSHB Ac4 / NCTC 3858a / NRRL 328 / USDA 3528.7).